The chain runs to 229 residues: Echinolectin 1 (229 aa).

Residue Asn-94 is glycosylated (N-linked (GlcNAc...) asparagine).

Its subcellular location is the secreted. This Echinometra lucunter (Rock-boring urchin) protein is Echinolectin 1.